A 337-amino-acid polypeptide reads, in one-letter code: Ribosomal RNA small subunit methyltransferase C (337 aa).

It belongs to the methyltransferase superfamily. RsmC family. In terms of assembly, monomer.

The protein localises to the cytoplasm. It catalyses the reaction guanosine(1207) in 16S rRNA + S-adenosyl-L-methionine = N(2)-methylguanosine(1207) in 16S rRNA + S-adenosyl-L-homocysteine + H(+). In terms of biological role, specifically methylates the guanine in position 1207 of 16S rRNA in the 30S particle. In Proteus mirabilis (strain HI4320), this protein is Ribosomal RNA small subunit methyltransferase C.